The following is a 248-amino-acid chain: Probable transcriptional regulatory protein FTF0655 (248 aa).

Belongs to the TACO1 family.

The protein resides in the cytoplasm. The protein is Probable transcriptional regulatory protein FTF0655 of Francisella tularensis subsp. tularensis (strain FSC 198).